The primary structure comprises 303 residues: Growth/differentiation factor 15 (303 aa).

The first 30 residues, 1–30 (MAPPALQAQPPGGSQLRFLLFLLLLLLLLS), serve as a signal peptide directing secretion. Positions 31–188 (WPSQGDALAM…LRVAAGRGRR (158 aa)) are excised as a propeptide. Residue asparagine 71 is glycosylated (N-linked (GlcNAc...) asparagine). 4 disulfide bridges follow: cysteine 198–cysteine 205, cysteine 206–cysteine 269, cysteine 235–cysteine 300, and cysteine 239–cysteine 302.

Belongs to the TGF-beta family. As to quaternary structure, homodimer; disulfide-linked. Interacts with GFRAL and RET; ligand of GFRAL, which mediates GDF15 internalization and cellular signaling through interaction with RET via the formation of a 2:2:2 ternary complex composed of GDF15, GFRAL and RET. As to expression, detected in plasma (at protein level). Highly expressed in liver. Expressed in the distal small intestine, colon and kidney. Expressed in skeletal muscle in response to mitochondrial stress. Expressed by cardiomyocytes, expression is highly increased in heart diseases. Also detected in subcutaneous fat.

It localises to the secreted. In terms of biological role, hormone produced in response to various stresses to confer information about those stresses to the brain, and trigger an aversive response, characterized by nausea and/or loss of appetite. The aversive response is both required to reduce continuing exposure to those stresses at the time of exposure and to promote avoidance behavior in the future. Acts by binding to its receptor, GFRAL, activating GFRAL-expressing neurons localized in the area postrema and nucleus tractus solitarius of the brainstem. It then triggers the activation of neurons localized within the parabrachial nucleus and central amygdala, which constitutes part of the 'emergency circuit' that shapes responses to stressful conditions. The GDF15-GFRAL signal induces expression of genes involved in metabolism, such as lipid metabolism in adipose tissues. Required for avoidance behavior in response to food allergens: induced downstream of mast cell activation to promote aversion and minimize harmful effects of exposure to noxious substances. In addition to suppress appetite, also promotes weight loss by enhancing energy expenditure in muscle: acts by increasing calcium futile cycling in muscle. Contributes to the effect of metformin, an anti-diabetic drug, on appetite reduction and weight loss: produced in the kidney in response to metformin treatment, thereby activating the GDF15-GFRAL response, leading to reduced appetite and weight. Produced in response to anticancer drugs, such as camptothecin or cisplatin, promoting nausea and contributing to malnutrition. Overproduced in many cancers, promoting anorexia in cancer (cachexia). Responsible for the risk of nausea during pregnancy: high levels of GDF15 during pregnancy, mostly originating from embryos, are associated with increased nausea. Maternal sensitivity to nausea is probably determined by pre-pregnancy exposure to GDF15, females with naturally high level of GDF15 being less susceptible to nausea than female mice with low levels of GDF15 before pregnancy. Promotes metabolic adaptation in response to systemic inflammation caused by bacterial and viral infections in order to promote tissue tolerance and prevent tissue damage. Required for tissue tolerance in response to myocardial infarction by acting as an inhibitor of leukocyte integring activation, thereby protecting against cardiac rupture. Inhibits growth hormone signaling on hepatocytes. This chain is Growth/differentiation factor 15, found in Mus musculus (Mouse).